The primary structure comprises 256 residues: Acetoacetate decarboxylase 3 (256 aa).

Lys-110 serves as the catalytic Schiff-base intermediate with acetoacetate.

Belongs to the ADC family.

It carries out the reaction acetoacetate + H(+) = acetone + CO2. Functionally, catalyzes the conversion of acetoacetate to acetone and carbon dioxide. The polypeptide is Acetoacetate decarboxylase 3 (Mesorhizobium japonicum (strain LMG 29417 / CECT 9101 / MAFF 303099) (Mesorhizobium loti (strain MAFF 303099))).